We begin with the raw amino-acid sequence, 175 residues long: Co-chaperone protein HscB homolog (175 aa).

Residues 8–80 (DFFSLFGLPR…LNRARYLLQL (73 aa)) enclose the J domain.

It belongs to the HscB family. In terms of assembly, interacts with HscA and stimulates its ATPase activity.

In terms of biological role, co-chaperone involved in the maturation of iron-sulfur cluster-containing proteins. Seems to help targeting proteins to be folded toward HscA. The sequence is that of Co-chaperone protein HscB homolog from Chromobacterium violaceum (strain ATCC 12472 / DSM 30191 / JCM 1249 / CCUG 213 / NBRC 12614 / NCIMB 9131 / NCTC 9757 / MK).